The sequence spans 280 residues: Antiactivator FleN (280 aa).

ATP-binding positions include 19-26, E153, N181, 215-217, and R221; these read KGGVGKTN and PYD.

It belongs to the ParA family. In terms of assembly, forms homodimers. Interacts with FleQ.

Its activity is regulated as follows. ATP-binding allows dimerization and subsequent antagonistic effect against FleQ. In terms of biological role, ATPase that plays an important role in maintaining flagellar number in Pseudomonas aeruginosa. Exhibits anti-activator activity against FleQ, the global transcriptional regulator of flagellar genes. This Pseudomonas aeruginosa (strain ATCC 15692 / DSM 22644 / CIP 104116 / JCM 14847 / LMG 12228 / 1C / PRS 101 / PAO1) protein is Antiactivator FleN.